We begin with the raw amino-acid sequence, 178 residues long: Cysteine-rich venom protein VAR3 (178 aa).

A signal peptide spans 1 to 22 (MILLKLYLTLAAILCQSRGTTS). Positions 41–169 (NKHNDLRRTV…PLKYFLVCQY (129 aa)) constitute an SCP domain. 3 disulfide bridges follow: cysteine 77-cysteine 156, cysteine 95-cysteine 170, and cysteine 151-cysteine 167.

This sequence belongs to the CRISP family. Contains 8 disulfide bonds. In terms of tissue distribution, expressed by the venom gland.

The protein resides in the secreted. Its function is as follows. Blocks ryanodine receptors, and potassium channels. The protein is Cysteine-rich venom protein VAR3 of Varanus acanthurus (Ridge-tailed monitor).